The sequence spans 966 residues: SH3 domain-binding protein 4 (966 aa).

An SH3 1 domain is found at 57-116 (GAAREVVAIKDCCPSSFTTLKFSKGDRLYVLDSSGAEWWYAHNNTEMGYIPAAYVEPINY). The region spanning 322-457 (TNIVCRLDSS…LEPCMYVCVV (136 aa)) is the ZU5 domain. The SH3 2 domain occupies 657–727 (NNLKFGKLIK…HAKNVLVVGK (71 aa)).

In terms of assembly, homodimer or homooligomer.

It localises to the membrane. The protein resides in the clathrin-coated pit. The protein localises to the cytoplasmic vesicle. Its subcellular location is the clathrin-coated vesicle. It is found in the nucleus. Possible role in regulating endocytosis of the transferrin receptor at the plasma membrane. Alternatively, may function as a negative regulator of the amino acid-induced TOR signaling by inhibiting the formation of active Rag GTPase complexes. Preferentially binds inactive Rag GTPase complexes and prevents their interaction with the mTORC1 complex inhibiting its relocalization to lysosomes and its activation. Thereby, may indirectly regulate cell growth, proliferation and autophagy. The chain is SH3 domain-binding protein 4 (sh3bp4) from Seriola quinqueradiata (Five-ray yellowtail).